A 169-amino-acid polypeptide reads, in one-letter code: MVRFKHRYLLCELVSEDARCRLSLDDRVLGGLVRDTIARVHGAFGAAACSVGFAVRYLNAYTGVVLLRCRKDFYQLVWSALPFITYLENKGHRYPCFFNTLHVGGTIRTCQKFLIQYNRRQLLILLQNCTDEGEREAIKKSVSRSCLLDREPVEELSDSAGEEVAEAME.

Phosphoserine is present on residues Ser157 and Ser159.

Belongs to the eukaryotic/archaeal RNase P protein component 2 family. Component of nuclear RNase P and RNase MRP ribonucleoproteins. RNase P consists of a catalytic RNA moiety and 10 different protein chains; POP1, POP4, POP5, POP7, RPP14, RPP21, RPP25, RPP30, RPP38 and RPP40. Within the RNase P complex, POP1, POP7 and RPP25 form the 'finger' subcomplex, POP5, RPP14, RPP40 and homodimeric RPP30 form the 'palm' subcomplex, and RPP21, POP4 and RPP38 form the 'wrist' subcomplex. All subunits of the RNase P complex interact with the catalytic RNA. Several subunits of RNase P are also part of the RNase MRP complex. RNase MRP consists of a catalytic RNA moiety and about 8 protein subunits; POP1, POP7, RPP25, RPP30, RPP38, RPP40 and possibly also POP4 and POP5.

The protein resides in the nucleus. The protein localises to the nucleolus. Component of ribonuclease P, a protein complex that generates mature tRNA molecules by cleaving their 5'-ends. Also a component of the MRP ribonuclease complex, which cleaves pre-rRNA sequences. In Mus musculus (Mouse), this protein is Ribonuclease P/MRP protein subunit POP5 (Pop5).